The primary structure comprises 397 residues: MTSYTDKGEKPERGKFLNFHHIKFWVGNAKQAAVFYCDKFGFEPLAYKGLETGSREVVSHAVRQDKIIFVFESALNPGNEEMGEHMIKHGDGVKDVAFLVEDCDFLVKKAKERGAAVLKEPWVEQDAGGKVKYAIVQTYGDTTHTFVEYLGPYKGLFLPGYKEPLFRDPLLPKLPSGHLSFIDHIVGNQPDDEMVPVSDWYQKCLLFHRFWSIDDKQIHTEYSALRSIVVTNYEETIKMPINEPAMGKKKSQIQEYIDYNGGPGVQHIALNTSNIIQAIVNLRARGLEFLSAPDNYYESLREKLKTAKIKVKEDLKTLQELKILVDFDDKGYLLQIFTKPVQDRPTLFLEVIQRNNHFGFGAGNFKSLFEAIEKDQDARGNLTVLTAQNQSVSKAFQ.

2 consecutive VOC domains span residues 18-149 (NFHH…FVEY) and 181-339 (FIDH…IFTK). Fe cation-binding residues include His-184, His-267, and Glu-350.

The protein belongs to the 4HPPD family. As to quaternary structure, homodimer. Fe cation serves as cofactor.

The protein localises to the cytoplasm. The protein resides in the endoplasmic reticulum membrane. It localises to the golgi apparatus membrane. It carries out the reaction 3-(4-hydroxyphenyl)pyruvate + O2 = homogentisate + CO2. It functions in the pathway amino-acid degradation; L-phenylalanine degradation; acetoacetate and fumarate from L-phenylalanine: step 3/6. Functionally, catalyzes the conversion of 4-hydroxyphenylpyruvic acid to homogentisic acid, one of the steps in tyrosine catabolism. The sequence is that of 4-hydroxyphenylpyruvate dioxygenase (hpd) from Danio rerio (Zebrafish).